The primary structure comprises 791 residues: Interleukin-17 receptor C (791 aa).

A signal peptide spans 1–20; the sequence is MPVPWFLLSLALGRSPVVLS. Residues 21–538 are Extracellular-facing; it reads LERLVGPQDA…CPMDKYIHKR (518 aa). Asn-189 and Asn-257 each carry an N-linked (GlcNAc...) asparagine glycan. Residues Cys-265 and Cys-277 are joined by a disulfide bond. N-linked (GlcNAc...) asparagine glycans are attached at residues Asn-284, Asn-297, Asn-324, and Asn-334. 3 disulfide bridges follow: Cys-341–Cys-391, Cys-343–Cys-359, and Cys-400–Cys-409. Asn-420, Asn-443, and Asn-477 each carry an N-linked (GlcNAc...) asparagine glycan. The cysteines at positions 439 and 453 are disulfide-linked. Disulfide bonds link Cys-481–Cys-488 and Cys-515–Cys-529. The helical transmembrane segment at 539–559 threads the bilayer; sequence WALVWLACLLFAAALSLILLL. At 560-791 the chain is on the cytoplasmic side; that stretch reads KKDHAKGWLR…GAGPGAGDGT (232 aa). The region spanning 583–735 is the SEFIR domain; it reads GRAALLLYSA…LPSQLPDFLG (153 aa). The segment at 762-791 is disordered; that stretch reads ALDSYFHPPGTPAPGRGVGPGAGPGAGDGT. Residues 777 to 791 show a composition bias toward gly residues; it reads RGVGPGAGPGAGDGT.

As to quaternary structure, homodimer; disulfide-linked. Heterodimer with IL17RA. Heterodimerization with IL17RA is independent of the cytoplasmic tail. Associates with non-glycosylated IL17RA constitutively. Binding of IL17A and IL17F induces association with glycosylated IL17RA. Forms complexes with 2:1 binding stoichiometry: two receptor chains for one interleukin molecule. IL17A homodimer preferentially drives the formation of IL17RA-IL17RC heterodimeric receptor complex, whereas IL17F homodimer forms predominantly complexes with IL17RC homodimer. IL17A-IL17F forms complexes with IL17RA-IL17RC, but with lower affinity when compared to IL17A homodimer. IL17RC chain cannot distinguish between IL17A and IL17F molecules, potentially enabling the formation of topologically distinct complexes. Interacts (through SEFIR domain and extended downstream region) with TRAF3IP2/ACT1 (phosphorylated). As to expression, expressed in prostate, skeletal muscle, kidney and placenta (at protein level). Expressed in brain, cartilage, colon, heart, intestine, kidney, liver, lung, muscle, placenta, and prostate. Also detected in thyroid, trachea and adrenal gland. Low expression in thymus and leukocytes.

Its subcellular location is the cell membrane. Receptor for IL17A and IL17F, major effector cytokines of innate and adaptive immune system involved in antimicrobial host defense and maintenance of tissue integrity. Receptor for IL17A and IL17F, major effector cytokines of innate and adaptive immune system involved in antimicrobial host defense and maintenance of tissue integrity. Receptor for IL17A and IL17F homodimers as part of a heterodimeric complex with IL17RA. Receptor for the heterodimer formed by IL17A and IL17B as part of a heterodimeric complex with IL17RA. Has also been shown to be the cognate receptor for IL17F and to bind IL17A with high affinity without the need for IL17RA. Upon binding of IL17F homodimer triggers downstream activation of TRAF6 and NF-kappa-B signaling pathway. Induces transcriptional activation of IL33, a potent cytokine that stimulates group 2 innate lymphoid cells and adaptive T-helper 2 cells involved in pulmonary allergic response to fungi. Promotes sympathetic innervation of peripheral organs by coordinating the communication between gamma-delta T cells and parenchymal cells. Stimulates sympathetic innervation of thermogenic adipose tissue by driving TGFB1 expression. Binding of IL17A-IL17F to IL17RA-IL17RC heterodimeric receptor complex triggers homotypic interaction of IL17RA and IL17RC chains with TRAF3IP2 adapter through SEFIR domains. This leads to downstream TRAF6-mediated activation of NF-kappa-B and MAPkinase pathways ultimately resulting in transcriptional activation of cytokines, chemokines, antimicrobial peptides and matrix metalloproteinases, with potential strong immune inflammation. Primarily induces neutrophil activation and recruitment at infection and inflammatory sites. Stimulates the production of antimicrobial beta-defensins DEFB1, DEFB103A, and DEFB104A by mucosal epithelial cells, limiting the entry of microbes through the epithelial barriers. Functionally, receptor for both IL17A and IL17F. Its function is as follows. Does not bind IL17A or IL17F. The sequence is that of Interleukin-17 receptor C (IL17RC) from Homo sapiens (Human).